The following is a 284-amino-acid chain: 2-dehydro-3-deoxyphosphooctonate aldolase (284 aa).

The protein belongs to the KdsA family.

The protein resides in the cytoplasm. It catalyses the reaction D-arabinose 5-phosphate + phosphoenolpyruvate + H2O = 3-deoxy-alpha-D-manno-2-octulosonate-8-phosphate + phosphate. Its pathway is carbohydrate biosynthesis; 3-deoxy-D-manno-octulosonate biosynthesis; 3-deoxy-D-manno-octulosonate from D-ribulose 5-phosphate: step 2/3. The protein operates within bacterial outer membrane biogenesis; lipopolysaccharide biosynthesis. This Mannheimia succiniciproducens (strain KCTC 0769BP / MBEL55E) protein is 2-dehydro-3-deoxyphosphooctonate aldolase.